The following is a 187-amino-acid chain: Phosphatidylethanolamine-binding protein 1 (187 aa).

Ala2 carries the post-translational modification N-acetylalanine; in peptide hippocampal cholinergic neurostimulating. Phosphoserine is present on residues Ser6 and Ser13. At Thr42 the chain carries Phosphothreonine. 4 positions are modified to phosphoserine: Ser52, Ser54, Ser98, and Ser153. Residues 93–134 form an interaction with RAF1 region; it reads KGNDISSGTVLSEYVGSGPPKDTGLHRYVWLVYEQEQPLNCD.

The protein belongs to the phosphatidylethanolamine-binding protein family. As to quaternary structure, has a tendency to form dimers by disulfide cross-linking. Interacts with RAF1 and this interaction is enhanced if RAF1 is phosphorylated on residues 'Ser-338', 'Ser-339', 'Tyr-340' and 'Tyr-341'. Interacts with ALOX15; in response to IL13/interleukin-13, prevents the interaction of PEBP1 with RAF1 to activate the ERK signaling cascade. In terms of tissue distribution, major component of epididymal secretions and sperm plasma membranes. It is present in cytosols from a variety of other tissues. Highly expressed in brain.

It localises to the cytoplasm. The protein localises to the membrane. In terms of biological role, binds ATP, opioids and phosphatidylethanolamine. Has lower affinity for phosphatidylinositol and phosphatidylcholine. Serine protease inhibitor which inhibits thrombin, neuropsin and chymotrypsin but not trypsin, tissue type plasminogen activator and elastase. Inhibits the kinase activity of RAF1 by inhibiting its activation and by dissociating the RAF1/MEK complex and acting as a competitive inhibitor of MEK phosphorylation. HCNP may be involved in the function of the presynaptic cholinergic neurons of the central nervous system. HCNP increases the production of choline acetyltransferase but not acetylcholinesterase. Seems to be mediated by a specific receptor. The sequence is that of Phosphatidylethanolamine-binding protein 1 (Pebp1) from Rattus norvegicus (Rat).